We begin with the raw amino-acid sequence, 142 residues long: HTH-type transcriptional regulator MntR (142 aa).

Residues 1–63 form the HTH dtxR-type domain; sequence MPTPSMEDYI…YEKYRGLVLT (63 aa). Mn(2+) is bound by residues Asp8, Glu11, His77, Glu99, Glu102, and His103.

This sequence belongs to the DtxR/MntR family. As to quaternary structure, homodimer.

The protein resides in the cytoplasm. With respect to regulation, DNA binding is strongly activated by Mn(2+). Its function is as follows. Central regulator of manganese homeostasis. This is HTH-type transcriptional regulator MntR from Bacillus cereus (strain B4264).